The following is a 595-amino-acid chain: Coronatine-insensitive protein homolog 1a (595 aa).

The F-box domain occupies 20–62 (WVPDEALHLVMGHVEDPRDREAASRVCRRWHRIDALTRKHVTV). 5 residues coordinate jasmonate: R90, R351, Y389, R412, and R499.

In terms of assembly, interacts with TIFY6A/JAZ3, TIFY6B/JAZ4 and TIFY11D/JAZ12 in a coronatine-dependent manner. Interacts with TIFY9/JAZ5, TIFY10A/JAZ6, TIFY10B/JAZ7, TIFY11A/JAZ9 and TIFY11C/JAZ11 in a coronatine-dependent manner.

Its function is as follows. Involved in jasmonate (JA) signaling. Required for jasmonate signaling in plant defense responses. Can complement Arabidopsis coi1-1 mutant and restore jasmonate signaling. Required for JA-regulated defense responses to infestation by the leaffolder Cnaphalocrocis medinalis. May act on an initial response of jasmonate-regulated gene expression toward drought tolerance as part of a BHLH148-TIFY11D/JAZ12-COI1A complex. Component of SCF(COI1) E3 ubiquitin ligase complexes, which may mediate the ubiquitination and subsequent proteasomal degradation of target proteins, including TIFY/JAZ family. This Oryza sativa subsp. indica (Rice) protein is Coronatine-insensitive protein homolog 1a.